The sequence spans 445 residues: Putative diacyglycerol O-acyltransferase Rv2285 (445 aa).

His-135 functions as the Proton acceptor in the catalytic mechanism.

The protein belongs to the long-chain O-acyltransferase family.

It catalyses the reaction an acyl-CoA + a 1,2-diacyl-sn-glycerol = a triacyl-sn-glycerol + CoA. The catalysed reaction is di-(9Z)-octadecenoylglycerol + (9Z)-octadecenoyl-CoA = 1,2,3-tri-(9Z-octadecenoyl)-glycerol + CoA. Its pathway is glycerolipid metabolism; triacylglycerol biosynthesis. In terms of biological role, catalyzes the terminal and only committed step in triacylglycerol synthesis by using diacylglycerol and fatty acyl CoA as substrates. Required for storage lipid synthesis. Upon expression in E.coli functions weakly as a triacylglycerol synthase, making triacylglycerol (TG) from diolein and long-chain fatty acyl-CoA. Has very weak wax synthase activity, incorporating palmityl alcohol into wax esters in the presence of palmitoyl-CoA. In Mycobacterium tuberculosis (strain ATCC 25618 / H37Rv), this protein is Putative diacyglycerol O-acyltransferase Rv2285.